Reading from the N-terminus, the 91-residue chain is DNA/RNA-binding protein Alba (91 aa).

Lysine 11 bears the N6-acetyllysine mark.

Belongs to the histone-like Alba family. In terms of processing, acetylated. Acetylation at Lys-11 decreases DNA-binding affinity.

The protein resides in the cytoplasm. Its subcellular location is the chromosome. In terms of biological role, binds double-stranded DNA tightly but without sequence specificity. Incubation with DNA in vitro gives fibrous structures 10.3 +/- 1.1 nm in thickness (naked DNA is 1.83 +/- 0.37 nm). This protein does not significantly compact DNA. This Thermococcus kodakarensis (strain ATCC BAA-918 / JCM 12380 / KOD1) (Pyrococcus kodakaraensis (strain KOD1)) protein is DNA/RNA-binding protein Alba.